The chain runs to 383 residues: S-adenosylmethionine synthase (383 aa).

Residue H15 participates in ATP binding. Residue D17 coordinates Mg(2+). E43 is a binding site for K(+). The L-methionine site is built by E56 and Q99. Positions 99–109 (QSPDINQGVDR) are flexible loop. Residues 164–166 (DAK), 230–231 (RF), D239, 245–246 (RK), A262, and K266 each bind ATP. D239 serves as a coordination point for L-methionine. Position 270 (K270) interacts with L-methionine.

The protein belongs to the AdoMet synthase family. As to quaternary structure, homotetramer; dimer of dimers. It depends on Mg(2+) as a cofactor. K(+) is required as a cofactor.

The protein resides in the cytoplasm. It catalyses the reaction L-methionine + ATP + H2O = S-adenosyl-L-methionine + phosphate + diphosphate. The protein operates within amino-acid biosynthesis; S-adenosyl-L-methionine biosynthesis; S-adenosyl-L-methionine from L-methionine: step 1/1. Its function is as follows. Catalyzes the formation of S-adenosylmethionine (AdoMet) from methionine and ATP. The overall synthetic reaction is composed of two sequential steps, AdoMet formation and the subsequent tripolyphosphate hydrolysis which occurs prior to release of AdoMet from the enzyme. This is S-adenosylmethionine synthase from Shewanella denitrificans (strain OS217 / ATCC BAA-1090 / DSM 15013).